We begin with the raw amino-acid sequence, 128 residues long: Large ribosomal subunit protein bL17 (128 aa).

Belongs to the bacterial ribosomal protein bL17 family. As to quaternary structure, part of the 50S ribosomal subunit. Contacts protein L32.

The polypeptide is Large ribosomal subunit protein bL17 (Pseudomonas fluorescens (strain Pf0-1)).